A 370-amino-acid chain; its full sequence is MSKPEYFIGLMSGTSMDGVDAVLVDFSAEHPVLIASHTEAIPAHLLKGLQRLCQPETDEINRLGRLDRSVGKLFAQAVNHLLAKTTVTAAEVIAIGSHGQTVRHMPNLEMGFTLQIGDPNTIAIETNIDVIADFRRKDIALGGQGAPLVPAFHQQVFAQPGHSRVILNIGGIANITYLPGNSEQVLGFDTGPGNNLIDAFIQQNLNQPFDEDGAWADSGTTHPDLLKQLLSHSYFSLAYPKSTGRELFNRAWLEQQLADYSHLDQQDIQSTLLDLTCHSIANDINKLSPNGELFVCGGGALNKALMQRLATLVPGYKVDTTSALGVDAKWVEGIAFAWLAMRYHHDLPANLPAVTGASRTAILGGRFKAR.

13-20 serves as a coordination point for ATP; the sequence is GTSMDGVD.

It belongs to the anhydro-N-acetylmuramic acid kinase family.

The catalysed reaction is 1,6-anhydro-N-acetyl-beta-muramate + ATP + H2O = N-acetyl-D-muramate 6-phosphate + ADP + H(+). It functions in the pathway amino-sugar metabolism; 1,6-anhydro-N-acetylmuramate degradation. Its pathway is cell wall biogenesis; peptidoglycan recycling. Catalyzes the specific phosphorylation of 1,6-anhydro-N-acetylmuramic acid (anhMurNAc) with the simultaneous cleavage of the 1,6-anhydro ring, generating MurNAc-6-P. Is required for the utilization of anhMurNAc either imported from the medium or derived from its own cell wall murein, and thus plays a role in cell wall recycling. The sequence is that of Anhydro-N-acetylmuramic acid kinase from Shewanella frigidimarina (strain NCIMB 400).